The following is a 121-amino-acid chain: UPF0102 protein BHWA1_02005 (121 aa).

The protein belongs to the UPF0102 family.

The polypeptide is UPF0102 protein BHWA1_02005 (Brachyspira hyodysenteriae (strain ATCC 49526 / WA1)).